The sequence spans 204 residues: CDP-archaeol synthase (204 aa).

A run of 6 helical transmembrane segments spans residues V5–L25, M43–V63, F91–A111, G116–V136, P147–F167, and V175–F195.

Belongs to the CDP-archaeol synthase family. Requires Mg(2+) as cofactor.

The protein localises to the cell membrane. The enzyme catalyses 2,3-bis-O-(geranylgeranyl)-sn-glycerol 1-phosphate + CTP + H(+) = CDP-2,3-bis-O-(geranylgeranyl)-sn-glycerol + diphosphate. It participates in membrane lipid metabolism; glycerophospholipid metabolism. In terms of biological role, catalyzes the formation of CDP-2,3-bis-(O-geranylgeranyl)-sn-glycerol (CDP-archaeol) from 2,3-bis-(O-geranylgeranyl)-sn-glycerol 1-phosphate (DGGGP) and CTP. This reaction is the third ether-bond-formation step in the biosynthesis of archaeal membrane lipids. This Thermofilum pendens (strain DSM 2475 / Hrk 5) protein is CDP-archaeol synthase.